A 191-amino-acid chain; its full sequence is Fe/S biogenesis protein NfuA (191 aa).

Cysteine 149 and cysteine 152 together coordinate [4Fe-4S] cluster.

This sequence belongs to the NfuA family. As to quaternary structure, homodimer. The cofactor is [4Fe-4S] cluster.

Involved in iron-sulfur cluster biogenesis. Binds a 4Fe-4S cluster, can transfer this cluster to apoproteins, and thereby intervenes in the maturation of Fe/S proteins. Could also act as a scaffold/chaperone for damaged Fe/S proteins. This chain is Fe/S biogenesis protein NfuA, found in Pectobacterium atrosepticum (strain SCRI 1043 / ATCC BAA-672) (Erwinia carotovora subsp. atroseptica).